The sequence spans 259 residues: Acetylglutamate kinase (259 aa).

Substrate contacts are provided by residues 45–46 (GG), Arg-67, and Asn-159.

Belongs to the acetylglutamate kinase family. ArgB subfamily.

It localises to the cytoplasm. It carries out the reaction N-acetyl-L-glutamate + ATP = N-acetyl-L-glutamyl 5-phosphate + ADP. The protein operates within amino-acid biosynthesis; L-arginine biosynthesis; N(2)-acetyl-L-ornithine from L-glutamate: step 2/4. Functionally, catalyzes the ATP-dependent phosphorylation of N-acetyl-L-glutamate. This chain is Acetylglutamate kinase, found in Aeromonas salmonicida (strain A449).